A 235-amino-acid polypeptide reads, in one-letter code: Exotoxin type C (235 aa).

Residues 1 to 27 (MKKINIIKIVFIITVILISTISPIIKS) form the signal peptide. Zn(2+)-binding residues include histidine 194, histidine 228, and aspartate 230.

This sequence belongs to the staphylococcal/streptococcal toxin family.

Its function is as follows. Superantigen that acts as a causative agent of the symptoms associated with scarlet fever. Has been associated with streptococcal toxic shock-like disease and may play a role in the early events of rheumatic fever. Superantigens cross-link major histocompatibility complex (MHC) class II and T-cell receptor (TCR) molecules, resulting in an overstimulation of T-cells associated with a massive release of pyrogenic and inflammatory cytokines. The polypeptide is Exotoxin type C (Streptococcus pyogenes serotype M18 (strain MGAS8232)).